The sequence spans 309 residues: Methionine synthase (309 aa).

The Zn(2+) site is built by histidine 201, cysteine 203, glutamate 224, and cysteine 285.

It belongs to the archaeal MetE family. Zn(2+) serves as cofactor.

Its pathway is amino-acid biosynthesis; L-methionine biosynthesis via de novo pathway. Its activity is regulated as follows. Is activated by phosphates. Its function is as follows. Catalyzes the transfer of a methyl group to L-homocysteine resulting in methionine formation. Can use methylcobalamin and methylcobinamide as methyl donors, but methylcobalamin is not considered to be the physiological substrate. It was proposed that, in vivo, a so-far-unidentified enzyme catalyzes methyltransfer from 5-methyltetrahydromethanopterin (5-CH3-H4MPT) to a corrinoid protein, and that the MetE gene product catalyzes the further transfer to L-homocysteine. Is not active with L-cysteine, coenzyme M, coenzyme B, glutathione or dithiothreitol as substrate. In Methanothermobacter marburgensis (strain ATCC BAA-927 / DSM 2133 / JCM 14651 / NBRC 100331 / OCM 82 / Marburg) (Methanobacterium thermoautotrophicum), this protein is Methionine synthase.